A 257-amino-acid polypeptide reads, in one-letter code: Homeobox protein goosecoid (257 aa).

A DNA-binding region (homeobox) is located at residues 160 to 219; the sequence is KRRHRTIFTDEQLEALENLFQETKYPDVGTREQLARKVHLREEKVEVWFKNRRAKWRRQK. Positions 213-257 are disordered; the sequence is AKWRRQKRSSSEESENAEKWNKTSSSKASPEKREEEGKSDLDSDS. The segment covering 241 to 257 has biased composition (basic and acidic residues); that stretch reads SPEKREEEGKSDLDSDS.

It belongs to the paired homeobox family. Bicoid subfamily.

The protein localises to the nucleus. In terms of biological role, regulates chordin (CHRD). May play a role in spatial programing within discrete embryonic fields or lineage compartments during organogenesis. In concert with NKX3-2, plays a role in defining the structural components of the middle ear; required for the development of the entire tympanic ring. Probably involved in the regulatory networks that define neural crest cell fate specification and determine mesoderm cell lineages in mammals. This Saguinus labiatus (Red-chested mustached tamarin) protein is Homeobox protein goosecoid (GSC).